The following is a 1673-amino-acid chain: Glutamine and serine-rich protein 1 (1673 aa).

8 disordered regions span residues Val-265–Ala-322, Asp-411–Val-543, Arg-872–Asn-892, Gln-923–Gly-961, Asp-1050–Ser-1081, Val-1149–Glu-1182, Leu-1216–Ala-1272, and Lys-1390–Ile-1476. The span at Ser-289–Lys-309 shows a compositional bias: polar residues. Low complexity-rich tracts occupy residues Ser-310–Ala-322 and Asp-411–Ser-458. Residues Tyr-459–Ser-539 are compositionally biased toward polar residues. A compositionally biased stretch (polar residues) spans Asn-947–Gln-956. Positions Asn-1222–Lys-1233 are enriched in basic and acidic residues. 2 stretches are compositionally biased toward polar residues: residues Lys-1259–Ala-1272 and Ala-1397–Ser-1411. A compositionally biased stretch (basic and acidic residues) spans Thr-1435–Phe-1451. Positions Ser-1452 to Met-1462 are enriched in low complexity.

It localises to the chromosome. Plays an essential role in the protection and maintenance of transcriptional and developmental programs. Protects many bivalent promoters and poised enhancers from hypermethylation, showing a marked preference for these regulatory elements over other types of promoters or enhancers. Mechanistically, cooperates with tet1 and binds to DNA in a common complex to inhibit the binding of dnmt3a/3b and therefore de novo methylation. In Xenopus laevis (African clawed frog), this protein is Glutamine and serine-rich protein 1 (qser1).